The primary structure comprises 75 residues: Large ribosomal subunit protein bL31 (75 aa).

The protein belongs to the bacterial ribosomal protein bL31 family. Type A subfamily. Part of the 50S ribosomal subunit.

Binds the 23S rRNA. This Rhodopseudomonas palustris (strain BisB18) protein is Large ribosomal subunit protein bL31.